Consider the following 471-residue polypeptide: UDP-N-acetylmuramate--L-alanine ligase (471 aa).

114–120 lines the ATP pocket; the sequence is GTHGKTT.

The protein belongs to the MurCDEF family.

It localises to the cytoplasm. It catalyses the reaction UDP-N-acetyl-alpha-D-muramate + L-alanine + ATP = UDP-N-acetyl-alpha-D-muramoyl-L-alanine + ADP + phosphate + H(+). It participates in cell wall biogenesis; peptidoglycan biosynthesis. In terms of biological role, cell wall formation. This chain is UDP-N-acetylmuramate--L-alanine ligase, found in Rhizobium johnstonii (strain DSM 114642 / LMG 32736 / 3841) (Rhizobium leguminosarum bv. viciae).